We begin with the raw amino-acid sequence, 1163 residues long: Leptin receptor (1163 aa).

The N-terminal stretch at 1-21 (MICQKFCVVLLHWEFICVITA) is a signal peptide. Residues 22 to 837 (FNLSYPITPW…QDNTEKHQND (816 aa)) lie on the Extracellular side of the membrane. Residues Asn23, Asn41, Asn56, Asn71, Asn79, Asn96, and Asn114 are each glycosylated (N-linked (GlcNAc...) asparagine). 2 disulfides stabilise this stretch: Cys37–Cys88 and Cys87–Cys97. 2 cysteine pairs are disulfide-bonded: Cys129-Cys140 and Cys184-Cys194. 5 N-linked (GlcNAc...) asparagine glycosylation sites follow: Asn185, Asn204, Asn274, Asn345, and Asn395. Positions 237–331 (PPLGLRMEIT…TPHVFTTQDV (95 aa)) constitute a Fibronectin type-III 1 domain. Disulfide bonds link Cys350–Cys410 and Cys411–Cys416. Residue Asn431 is glycosylated (N-linked (GlcNAc...) asparagine). Intrachain disulfides connect Cys434-Cys445, Cys471-Cys526, and Cys486-Cys496. A leptin-binding region spans residues 465-482 (RRSSLYCFDIPSIHPISK). 3 consecutive Fibronectin type-III domains span residues 537 to 632 (PPSS…TVVM), 637 to 730 (PMRG…LTFS), and 738 to 831 (IVQS…QDNT). Positions 620 to 624 (WSNWS) match the WSXWS motif motif. Asn622, Asn657, Asn668, Asn686, Asn695, Asn726, and Asn748 each carry an N-linked (GlcNAc...) asparagine glycan. Residues 838–860 (AGLYVIVPVIISSSILLLGTLLI) form a helical membrane-spanning segment. Over 861-1163 (LHQRMKKLFW…MENKMCDLTV (303 aa)) the chain is Cytoplasmic. The short motif at 869-877 (FWEDVPNPK) is the Box 1 motif element. Residue Ser880 is modified to Phosphoserine. The tract at residues 891–896 (ETFEHL) is required for JAK2 activation. The segment at 896 to 904 (LFIKHTASV) is required for STAT3 phosphorylation. Phosphotyrosine; by JAK2 is present on Tyr984. At Tyr1077 the chain carries Phosphotyrosine. Position 1139 is a phosphotyrosine; by JAK2 (Tyr1139).

Belongs to the type I cytokine receptor family. Type 2 subfamily. In terms of assembly, present as a mixture of monomers and dimers. The phosphorylated receptor binds a number of SH2 domain-containing proteins such as JAK2, STAT3, PTPN11, and SOCS3. Interaction with SOCS3 inhibits JAK/STAT signaling and MAPK cascade. On ligand binding, phosphorylated on two conserved C-terminal tyrosine residues (isoform B only) by JAK2. Tyr-984 is required for complete binding and activation of PTPN11, ERK/FOS activation and, for interaction with SOCS3. Phosphorylation on Tyr-1139 is required for STAT3 binding/activation. Post-translationally, on ligand binding, phosphorylated on two conserved C-terminal tyrosine residues (isoform B only) by JAK2. Tyr-984 is required for complete binding and activation of PTPN11, ERK/FOS activation,for interaction with SOCS3 and SOCS3 mediated inhibition of leptin signaling. Phosphorylation on Tyr-1139 is required for STAT3 binding/activation. Phosphorylation of Tyr-1077 has a more accessory role. As to expression, widely expressed. High expression of isoform B in liver, adipose tissue, hypothalamus and choroid plexus.

It localises to the cell membrane. The protein resides in the basolateral cell membrane. Its function is as follows. Receptor for hormone LEP/leptin. On ligand binding, mediates LEP central and peripheral effects through the activation of different signaling pathways such as JAK2/STAT3 and MAPK cascade/FOS. In the hypothalamus, LEP acts as an appetite-regulating factor that induces a decrease in food intake and an increase in energy consumption by inducing anorexinogenic factors and suppressing orexigenic neuropeptides, also regulates bone mass and secretion of hypothalamo-pituitary-adrenal hormones. In the periphery, increases basal metabolism, influences reproductive function, regulates pancreatic beta-cell function and insulin secretion, is pro-angiogenic and affects innate and adaptive immunity. Control of energy homeostasis and melanocortin production (stimulation of POMC and full repression of AgRP transcription) is mediated by STAT3 signaling, whereas distinct signals regulate NPY and the control of fertility, growth and glucose homeostasis. Involved in the regulation of counter-regulatory response to hypoglycemia by inhibiting neurons of the parabrachial nucleus. Has a specific effect on T lymphocyte responses, differentially regulating the proliferation of naive and memory T-cells. Leptin increases Th1 and suppresses Th2 cytokine production. In terms of biological role, may transport LEP across the blood-brain barrier. Binds LEP and mediates LEP endocytosis. Does not induce phosphorylation of and activate STAT3. This chain is Leptin receptor (LEPR), found in Macaca mulatta (Rhesus macaque).